Here is a 238-residue protein sequence, read N- to C-terminus: Ribonuclease PH (238 aa).

Residues R86 and 124-126 (GTR) each bind phosphate.

Belongs to the RNase PH family. Homohexameric ring arranged as a trimer of dimers.

It catalyses the reaction tRNA(n+1) + phosphate = tRNA(n) + a ribonucleoside 5'-diphosphate. In terms of biological role, phosphorolytic 3'-5' exoribonuclease that plays an important role in tRNA 3'-end maturation. Removes nucleotide residues following the 3'-CCA terminus of tRNAs; can also add nucleotides to the ends of RNA molecules by using nucleoside diphosphates as substrates, but this may not be physiologically important. Probably plays a role in initiation of 16S rRNA degradation (leading to ribosome degradation) during starvation. The protein is Ribonuclease PH of Anaeromyxobacter sp. (strain Fw109-5).